We begin with the raw amino-acid sequence, 258 residues long: Regulatory protein RecX (258 aa).

Belongs to the RecX family.

Its subcellular location is the cytoplasm. Functionally, modulates RecA activity. This is Regulatory protein RecX from Streptococcus uberis (strain ATCC BAA-854 / 0140J).